The sequence spans 307 residues: Dioxygenase cdmD (307 aa).

The Fe cation site is built by His-146, Asp-148, and His-226.

Belongs to the PhyH family. Homodimer. It depends on Fe cation as a cofactor.

The catalysed reaction is verruculide A + 2-oxoglutarate + O2 = chrodrimanin T + succinate + CO2. The enzyme catalyses chrodrimanin E + 2-oxoglutarate + O2 = chrodrimanin A + succinate + CO2. The protein operates within secondary metabolite biosynthesis; terpenoid biosynthesis. Functionally, dioxygenase; part of the gene cluster that mediates the biosynthesis of chrodrimanin B, a meroterpenoid that acts as a potent blocker of insect GABA-gated chloride channels. The first step of the pathway is the biosynthesis of 6-hydroxymellein by the polyketide synthase cdmE. The prenyltransferase cdmH acts as a 6-hydroxymellein 5-farnesyltransferase and produces the hydrophobic metabolite verruculide C. The FAD-dependent monooxygenase cdmI further converts verruculide C into verruculide B. The terpene cyclase cdmG then produced the pentacyclic molecule 3-hydroxypentacecilide A, the backbone structure of chrodrimanin B, via folding the farnesyl moiety of the substrate into the chair-boat conformation. The short-chain dehydrogenase/reductase cdmF functions as the 3-OH dehydrogenase that oxidizes the C-3 hydroxyl group of 3-hydroxypentacecilide A and produces chrodrimanin C, the dehydrogenated product of 3-hydroxypentacecilide A. The cytochrome P450 monooxygenase cdmJ then accepts both 3-hydroxypentacecilide A and chrodrimanin C and functions as a C-7-beta-hydroxylase to produce respectively chrodrimanin H and chrodrimanin F. The dioxygenase cdmA accepts chrodrimanin H to afford chrodrimanin E, which is further transformed to chrodrimanin A by the dioxygenase cdmD. CdmA can also accept chrodrimanin C as substrate to convert it into verruculide A, which is further converted into chrodrimanin T by cdmD. The last step of the biosynthesis is proposed to be performed by the acetyltransferase cdmC which acetylates chrodrimanin A to yield chrodrimanin B. The pathway may also lead to the production of additional shunt products, including chrodrimanins T and U. In Talaromyces verruculosus (Penicillium verruculosum), this protein is Dioxygenase cdmD.